The sequence spans 284 residues: Tryptophan synthase alpha chain (284 aa).

Residues E55 and D66 each act as proton acceptor in the active site.

This sequence belongs to the TrpA family. As to quaternary structure, tetramer of two alpha and two beta chains.

The enzyme catalyses (1S,2R)-1-C-(indol-3-yl)glycerol 3-phosphate + L-serine = D-glyceraldehyde 3-phosphate + L-tryptophan + H2O. It participates in amino-acid biosynthesis; L-tryptophan biosynthesis; L-tryptophan from chorismate: step 5/5. Its function is as follows. The alpha subunit is responsible for the aldol cleavage of indoleglycerol phosphate to indole and glyceraldehyde 3-phosphate. The protein is Tryptophan synthase alpha chain of Methanococcus voltae.